The primary structure comprises 153 residues: Large ribosomal subunit protein uL13 (153 aa).

It belongs to the universal ribosomal protein uL13 family. As to quaternary structure, part of the 50S ribosomal subunit.

Its function is as follows. This protein is one of the early assembly proteins of the 50S ribosomal subunit, although it is not seen to bind rRNA by itself. It is important during the early stages of 50S assembly. This chain is Large ribosomal subunit protein uL13, found in Xanthobacter autotrophicus (strain ATCC BAA-1158 / Py2).